The sequence spans 94 residues: MLQSNEYFSGKVKSIGFTSSSIGRASVGVMAEGEYTFGTAEPEEMTVVSGALKVLLPGTVEWKVYTAGEVFNVPGHSEFHLQVAEPTSYLCRYL.

The protein belongs to the nucleoside phosphorylase PpnP family.

It carries out the reaction a purine D-ribonucleoside + phosphate = a purine nucleobase + alpha-D-ribose 1-phosphate. The catalysed reaction is adenosine + phosphate = alpha-D-ribose 1-phosphate + adenine. The enzyme catalyses cytidine + phosphate = cytosine + alpha-D-ribose 1-phosphate. It catalyses the reaction guanosine + phosphate = alpha-D-ribose 1-phosphate + guanine. It carries out the reaction inosine + phosphate = alpha-D-ribose 1-phosphate + hypoxanthine. The catalysed reaction is thymidine + phosphate = 2-deoxy-alpha-D-ribose 1-phosphate + thymine. The enzyme catalyses uridine + phosphate = alpha-D-ribose 1-phosphate + uracil. It catalyses the reaction xanthosine + phosphate = alpha-D-ribose 1-phosphate + xanthine. Its function is as follows. Catalyzes the phosphorolysis of diverse nucleosides, yielding D-ribose 1-phosphate and the respective free bases. Can use uridine, adenosine, guanosine, cytidine, thymidine, inosine and xanthosine as substrates. Also catalyzes the reverse reactions. The protein is Pyrimidine/purine nucleoside phosphorylase of Salmonella newport (strain SL254).